Here is a 939-residue protein sequence, read N- to C-terminus: U3 small nucleolar RNA-associated protein 21 (939 aa).

Serine 2 is modified (N-acetylserine). WD repeat units follow at residues 40-71, 81-111, 119-158, 168-201, 208-245, 252-287, 295-347, 354-388, 415-454, 463-497, 505-541, 546-581, 583-624, and 626-664; these read ATGTLGSTFYIVTCVGKTFQIYDANTLHLLFV, VALSAHFHYVYAAYENKVGIYKRGIEEHLLE, EHLCIFGDYLCASTDDNSIFIYKKSDPQDKYPSEFYTKLT, VSLQHLATYLNKLTVVTKSNVLLFNVRTGKLVFT, QITTAEPAPVLDIIALGTVTGEVIMFNMRKGKRIRTIK, SSLSFRTDGSSHLSVGTSSGDLIFYDLDRRSRIHVL, YGGV…RSRG, SYIAFADSQSHFMLSASKDRSLWSFSLRKDAQSQE, VALAIENARIGEWENIITAHKDEKFARTWDMRNKRVGRWT, VKSVAMSQCGNFGFIGSSNGSITIYNMQSGILRKK, VTGISLDGMNRKMVSCGLDGIVGFYDFNKSTLLGKLK, ITAMVYHRSSDLFALALDDLSIVVIDAVTQRVVRQL, GHSN…DGII, and DNVATNVKFSPNGDLLATTHVTGNGICIWTNRAQFKTVS. Serine 772 carries the post-translational modification Phosphoserine.

In terms of assembly, interacts with snoRNA U3. Interacts with MPP10. Interacts (via WD repeats) with UTP18. Component of the ribosomal small subunit (SSU) processome composed of at least 40 protein subunits and snoRNA U3.

It localises to the nucleus. The protein localises to the nucleolus. Functionally, involved in nucleolar processing of pre-18S ribosomal RNA and ribosome assembly. The sequence is that of U3 small nucleolar RNA-associated protein 21 (UTP21) from Saccharomyces cerevisiae (strain ATCC 204508 / S288c) (Baker's yeast).